We begin with the raw amino-acid sequence, 343 residues long: Glycogen biosynthesis protein GlgD (343 aa).

It belongs to the bacterial/plant glucose-1-phosphate adenylyltransferase family.

In terms of biological role, required for the synthesis of glycogen. The protein is Glycogen biosynthesis protein GlgD (glgD) of Geobacillus stearothermophilus (Bacillus stearothermophilus).